The primary structure comprises 684 residues: Translation factor GUF1 homolog, mitochondrial (684 aa).

Residues 82 to 270 (HLIRNFSIIA…AVIERIPQPK (189 aa)) enclose the tr-type G domain. GTP is bound by residues 91–98 (AHVDHGKS), 163–167 (DTPGH), and 217–220 (NKID).

This sequence belongs to the TRAFAC class translation factor GTPase superfamily. Classic translation factor GTPase family. LepA subfamily.

The protein localises to the mitochondrion inner membrane. The enzyme catalyses GTP + H2O = GDP + phosphate + H(+). Its function is as follows. Promotes mitochondrial protein synthesis. May act as a fidelity factor of the translation reaction, by catalyzing a one-codon backward translocation of tRNAs on improperly translocated ribosomes. Binds to mitochondrial ribosomes in a GTP-dependent manner. The chain is Translation factor GUF1 homolog, mitochondrial from Physcomitrium patens (Spreading-leaved earth moss).